Here is a 332-residue protein sequence, read N- to C-terminus: 2,3-diketo-L-gulonate reductase (332 aa).

Histidine 44 acts as the Proton donor in catalysis. Residues 168–174 (ITMVDMS), 224–225 (WK), and 304–306 (GHE) contribute to the NAD(+) site.

The protein belongs to the LDH2/MDH2 oxidoreductase family. DlgD subfamily. In terms of assembly, homodimer.

It localises to the cytoplasm. The catalysed reaction is 3-dehydro-L-gulonate + NAD(+) = 2,3-dioxo-L-gulonate + NADH + H(+). It catalyses the reaction 3-dehydro-L-gulonate + NADP(+) = 2,3-dioxo-L-gulonate + NADPH + H(+). Functionally, catalyzes the reduction of 2,3-diketo-L-gulonate in the presence of NADH, to form 3-keto-L-gulonate. The polypeptide is 2,3-diketo-L-gulonate reductase (Salmonella typhi).